A 415-amino-acid polypeptide reads, in one-letter code: Putative competence-damage inducible protein (415 aa).

The protein belongs to the CinA family.

The chain is Putative competence-damage inducible protein from Listeria welshimeri serovar 6b (strain ATCC 35897 / DSM 20650 / CCUG 15529 / CIP 8149 / NCTC 11857 / SLCC 5334 / V8).